The primary structure comprises 561 residues: MSLYINIKDTIYANLAKAALEAQKAGELSFESLPNYVLEEPREKQHGDWATNLAMVLTKQARKAPRDIATILIKHLDTEGTFITASEIAGPGFINFRLDPNWLTGVIPEVLNLEADYGKVNLGQGKKVQVEFVSANPTGLLHMGNARGAALGDSLAALLAMAGYEVSREFYINDAGNQIYNFALSLEARYLQLMGQDVPFPEGGYHGEDLIDTVKGLIEKVGNKYLNVDQDLRREFLVRYALEEKLTSIRETLTDMGVHYDCWFSEQSLHDSGFVKDTMEKLEQQGYIYEKEGAQWLKSTLFGDEKDEVVVRGNGTPTYFAADIAYHRNKFERGFDRVINIWGADHHGHVARMKGAMSALGYDPENLQIILMQLVRLIQNGEVVRMSKRSGQYITLRELMDEVGKDAARFFFIMRDPDSTVEFDLDLAKAESSDNPVYYVQYAHARLCSILRQAAEQGYNTAGIPQEGELKRLQSNEERELLKKIAELPNEIEVAARLTEPHRLARYVLDLAGLFHSFYNSQRVLVDEEGLREARLGLVRSTKQVLANVLGILGVTAPERM.

The short motif at 135 to 145 (ANPTGLLHMGN) is the 'HIGH' region element.

Belongs to the class-I aminoacyl-tRNA synthetase family. As to quaternary structure, monomer.

Its subcellular location is the cytoplasm. The catalysed reaction is tRNA(Arg) + L-arginine + ATP = L-arginyl-tRNA(Arg) + AMP + diphosphate. This chain is Arginine--tRNA ligase, found in Desulfitobacterium hafniense (strain DSM 10664 / DCB-2).